A 1222-amino-acid polypeptide reads, in one-letter code: ATP-dependent helicase/nuclease subunit A (1222 aa).

A UvrD-like helicase ATP-binding domain is found at 39–495; that stretch reads QKRTAQQIEA…ILLKENFRSQ (457 aa). ATP is bound at residue 60–67; that stretch reads ASAGSGKT. Positions 524–810 constitute a UvrD-like helicase C-terminal domain; the sequence is QLIAGSHAQT…NLMTIHKSKG (287 aa).

Belongs to the helicase family. AddA subfamily. As to quaternary structure, heterodimer of AddA and AddB/RexB. Requires Mg(2+) as cofactor.

The enzyme catalyses Couples ATP hydrolysis with the unwinding of duplex DNA by translocating in the 3'-5' direction.. The catalysed reaction is ATP + H2O = ADP + phosphate + H(+). In terms of biological role, the heterodimer acts as both an ATP-dependent DNA helicase and an ATP-dependent, dual-direction single-stranded exonuclease. Recognizes the chi site generating a DNA molecule suitable for the initiation of homologous recombination. The AddA nuclease domain is required for chi fragment generation; this subunit has the helicase and 3' -&gt; 5' nuclease activities. The polypeptide is ATP-dependent helicase/nuclease subunit A (Streptococcus pyogenes serotype M4 (strain MGAS10750)).